A 500-amino-acid chain; its full sequence is Monocarboxylate transporter 1 (500 aa).

Residues 1–22 (MPPAVGGPVGYTPPDGGWGWAV) are Cytoplasmic-facing. The helical transmembrane segment at 23 to 44 (VIGAFISIGFSYAFPKSITVFF) threads the bilayer. Lys-38 provides a ligand contact to (S)-lactate. Over 45–55 (KEIEGIFHATT) the chain is Extracellular. The helical transmembrane segment at 56-80 (SEVSWISSIMLAVMYGGGPISSILV) threads the bilayer. At 81 to 84 (NKYG) the chain is on the cytoplasmic side. A helical membrane pass occupies residues 85–105 (SRIVMIVGGCLSGCGLIAASF). The Extracellular segment spans residues 106 to 109 (CNTV). The helical transmembrane segment at 110–132 (QQLYVCIGVIGGLGLAFNLNPAL) threads the bilayer. Residues 133-146 (TMIGKYFYKRRPLA) lie on the Cytoplasmic side of the membrane. Residues 147–169 (NGLAMAGSPVFLCTLAPLNQVFF) traverse the membrane as a helical segment. Residues 170–174 (GIFGW) are Extracellular-facing. Residues 175-194 (RGSFLILGGLLLNCCVAGAL) form a helical membrane-spanning segment. Residues 195–261 (MRPIGPKPTK…FLDLTLFTHR (67 aa)) are Cytoplasmic-facing. Phosphoserine occurs at positions 210 and 213. Residue Thr-231 is modified to Phosphothreonine. A helical transmembrane segment spans residues 262-288 (GFLLYLSGNVIMFFGLFAPLVFLSSYG). The Extracellular portion of the chain corresponds to 289–295 (KSQHYSS). A helical membrane pass occupies residues 296–317 (EKSAFLLSILAFVDMVARPSMG). Asp-309 provides a ligand contact to H(+). (S)-lactate is bound at residue Arg-313. At 318-328 (LVANTKPIRPR) the chain is on the cytoplasmic side. A helical membrane pass occupies residues 329 to 349 (IQYFFAASVVANGVCHMLAPL). Residues 350 to 353 (STTY) are Extracellular-facing. Residues 354–375 (VGFCVYAGFFGFAFGWLSSVLF) form a helical membrane-spanning segment. The Cytoplasmic segment spans residues 376–389 (ETLMDLVGPQRFSS). The helical transmembrane segment at 390 to 410 (AVGLVTIVECCPVLLGPPLLG) threads the bilayer. Residues 411–421 (RLNDMYGDYKY) are Extracellular-facing. The chain crosses the membrane as a helical span at residues 422 to 443 (TYWACGVVLIISGIYLFIGMGI). The Cytoplasmic portion of the chain corresponds to 444–500 (NYRLLAKEQKANEQKKESKEEETSIDVAGKPNEVTKAAESPDQKDTDGGPKEEESPV). Basic and acidic residues predominate over residues 454–465 (ANEQKKESKEEE). The tract at residues 454-500 (ANEQKKESKEEETSIDVAGKPNEVTKAAESPDQKDTDGGPKEEESPV) is disordered. Ser-461 carries the post-translational modification Phosphoserine. Residue Thr-466 is modified to Phosphothreonine. Residues Ser-467, Ser-483, and Ser-498 each carry the phosphoserine modification. Basic and acidic residues predominate over residues 482-500 (ESPDQKDTDGGPKEEESPV).

Belongs to the major facilitator superfamily. Monocarboxylate porter (TC 2.A.1.13) family. In terms of assembly, interacts with EMB; interaction mediates SLC16A1 targeting to the plasma membrane. Interacts with isoform 2 of BSG; interaction mediates SLC16A1 targeting to the plasma membrane. As to expression, widely expressed. Detected in heart and in blood lymphocytes and monocytes (at protein level).

It localises to the cell membrane. The protein localises to the basolateral cell membrane. The protein resides in the apical cell membrane. The enzyme catalyses (S)-lactate(in) + H(+)(in) = (S)-lactate(out) + H(+)(out). It catalyses the reaction acetate(out) + H(+)(out) = acetate(in) + H(+)(in). It carries out the reaction acetoacetate(out) + H(+)(out) = acetoacetate(in) + H(+)(in). The catalysed reaction is pyruvate(out) + H(+)(out) = pyruvate(in) + H(+)(in). The enzyme catalyses (R)-3-hydroxybutanoate(out) + H(+)(out) = (R)-3-hydroxybutanoate(in) + H(+)(in). It catalyses the reaction 3-methyl-2-oxobutanoate(out) + H(+)(out) = 3-methyl-2-oxobutanoate(in) + H(+)(in). It carries out the reaction 4-methyl-2-oxopentanoate(out) + H(+)(out) = 4-methyl-2-oxopentanoate(in) + H(+)(in). The catalysed reaction is succinate(in) + 2 H(+)(in) = succinate(out) + 2 H(+)(out). Its activity is regulated as follows. Selectively inhibited by AZD3965, that acts as a competitive inhibitor binding to the central channel in the outward open conformation. In terms of biological role, bidirectional proton-coupled monocarboxylate transporter. Catalyzes the rapid transport across the plasma membrane of many monocarboxylates such as lactate, pyruvate, acetate and the ketone bodies acetoacetate and beta-hydroxybutyrate, and thus contributes to the maintenance of intracellular pH. The transport direction is determined by the proton motive force and the concentration gradient of the substrate monocarboxylate. MCT1 is a major lactate exporter. Plays a role in cellular responses to a high-fat diet by modulating the cellular levels of lactate and pyruvate that contribute to the regulation of central metabolic pathways and insulin secretion, with concomitant effects on plasma insulin levels and blood glucose homeostasis. Facilitates the protonated monocarboxylate form of succinate export, that its transient protonation upon muscle cell acidification in exercising muscle and ischemic heart. Functions via alternate outward- and inward-open conformation states. Protonation and deprotonation of 309-Asp is essential for the conformational transition. The sequence is that of Monocarboxylate transporter 1 from Homo sapiens (Human).